The following is a 104-amino-acid chain: Large ribosomal subunit protein bL21 (104 aa).

Belongs to the bacterial ribosomal protein bL21 family. Part of the 50S ribosomal subunit. Contacts protein L20.

This protein binds to 23S rRNA in the presence of protein L20. This Thermotoga petrophila (strain ATCC BAA-488 / DSM 13995 / JCM 10881 / RKU-1) protein is Large ribosomal subunit protein bL21.